A 70-amino-acid chain; its full sequence is Turripeptide OL179 (70 aa).

A signal peptide spans 1-21 (MMAKQVVVLLALLLLLPIVTA). A propeptide spanning residues 22-32 (SMGDASGRTGR) is cleaved from the precursor.

As to expression, expressed by the venom duct.

The protein localises to the secreted. Its function is as follows. Acts as a neurotoxin by inhibiting an ion channel. This chain is Turripeptide OL179, found in Iotyrris olangoensis (Sea snail).